The chain runs to 449 residues: MVNFNSAVNILEVVQVSPPSSNSLTLPLTYFDLGWLKLHPVDRVLFYHVPELTRSSLISKLKSSLSATLLHYLPLAGRLVWDSIKTKPSIVYSPDDKDAVYLTVAESNGDLSHLSGDEPRPATEFHSLVPELPVSDESARVLAVQVTFFPNQGFSLGVTAHHAVLDGKTTAMFLKAWAHNCKQEQEALPHDLVPSLDRIIVQDPTGLETKLLNRWISASNNKPSLKLFPSKIIGSDILRVTYRLTREDIKKLRERVETESHAKQLRLSTFVITYAYVITCMVKMRGGDPTRFVCVGFASDFRSRLNPPLPPTFFGNCIVGSGDFDVKAEPILEEGEGKGFITAVETLTGWVNGLCPENIEKNMLLPFEAFKRMEPGRQMISVAGSTRLGIYGSDFGWGKPVKVEIVTIDKDASVSLSESGDGSGGVEVGVCLKKDDVERFGSLFSIGLE.

The residue at position 1 (Met-1) is an N-acetylmethionine. Residues His-162 and Asp-394 each act as proton acceptor in the active site.

Belongs to the plant acyltransferase family. As to expression, expressed in flowers. Detected in leaves, stems, roots and siliques.

The enzyme catalyses anthocyanin A3 + malonyl-CoA = anthocyanin A5 + CoA. It carries out the reaction anthocyanin A7 + malonyl-CoA = anthocyanin A9 + CoA. It catalyses the reaction anthocyanin A6 + malonyl-CoA = anthocyanin A8 + CoA. The catalysed reaction is anthocyanin A10 + malonyl-CoA = anthocyanin A11 + CoA. Its function is as follows. Catalyzes the malonylation of the 5-O-glucose residue of anthocyanins, using malonyl-CoA as the malonyl donor. Acts only on anthocyanin substrates containing a 5-O-glucosyl moiety. Acts on the four native A.thaliana anthocyanins, A3, A7, and to a lesser extent, A6 and A10. Can also use the non-native anthocyanin compounds cyanin (cyanidin 3,5-diglucoside), malvin, pelargonidin 3,5-diglucoside, peonidin 3,5-diglucoside, cyanidin 3-coumaroylglucoside 5-glucoside, delphinidin 3-coumaroylrutinoside 5-glucoside and petunidin 3-coumaroylrutinoside 5-glucoside as substrates. Is the sole enzyme responsible for producing malonylated anthocyanin 5-O-glucosides in A.thaliana. Is not able to catalyze acyl transfer using acetyl-CoA, butyryl-CoA, hexanoyl-CoA, benzoyl-CoA, cinnamoyl-CoA, methylmalonyl-CoA, succinyl-CoA, p-coumaroyl-CoA or caffeoyl-CoA. The chain is Malonyl-CoA:anthocyanidin 5-O-glucoside-6''-O-malonyltransferase (5MAT) from Arabidopsis thaliana (Mouse-ear cress).